We begin with the raw amino-acid sequence, 243 residues long: Phosphoribosyl isomerase A (243 aa).

Aspartate 9 functions as the Proton acceptor in the catalytic mechanism. The Proton donor role is filled by aspartate 128.

This sequence belongs to the HisA/HisF family.

The protein resides in the cytoplasm. The enzyme catalyses 1-(5-phospho-beta-D-ribosyl)-5-[(5-phospho-beta-D-ribosylamino)methylideneamino]imidazole-4-carboxamide = 5-[(5-phospho-1-deoxy-D-ribulos-1-ylimino)methylamino]-1-(5-phospho-beta-D-ribosyl)imidazole-4-carboxamide. It carries out the reaction N-(5-phospho-beta-D-ribosyl)anthranilate = 1-(2-carboxyphenylamino)-1-deoxy-D-ribulose 5-phosphate. It participates in amino-acid biosynthesis; L-histidine biosynthesis; L-histidine from 5-phospho-alpha-D-ribose 1-diphosphate: step 4/9. It functions in the pathway amino-acid biosynthesis; L-tryptophan biosynthesis; L-tryptophan from chorismate: step 3/5. Functionally, involved in both the histidine and tryptophan biosynthetic pathways. The protein is Phosphoribosyl isomerase A of Mycobacterium avium (strain 104).